The sequence spans 136 residues: Histone H3 (136 aa).

The disordered stretch occupies residues M1–K43. K5 is subject to N6,N6,N6-trimethyllysine; alternate. Residue K5 is modified to N6,N6-dimethyllysine; alternate. An N6-methyllysine; alternate mark is found at K5 and K10. Residue K10 is modified to N6-acetyllysine; alternate. A Phosphoserine modification is found at S11. Residue K15 is modified to N6,N6-dimethyllysine; alternate. Residues K15, K19, K24, K28, and K37 each carry the N6-methyllysine; alternate modification. Residues K15, K19, K24, K28, and K37 each carry the N6-acetyllysine; alternate modification. N6,N6,N6-trimethyllysine; alternate is present on residues K28 and K37. 2 positions are modified to N6,N6-dimethyllysine; alternate: K28 and K37. An N6-acetyllysine mark is found at K57 and K65. K80 carries the post-translational modification N6,N6,N6-trimethyllysine; alternate. K80 is modified (N6,N6-dimethyllysine; alternate). Residue K80 is modified to N6-methyllysine; alternate.

Belongs to the histone H3 family. The nucleosome is a histone octamer containing two molecules each of H2A, H2B, H3 and H4 assembled in one H3-H4 heterotetramer and two H2A-H2B heterodimers. The octamer wraps approximately 147 bp of DNA. In terms of processing, phosphorylated by IPL1 to form H3S10ph. H3S10ph promotes subsequent H3K14ac formation by GCN5 and is required for transcriptional activation through TBP recruitment to the promoters. Mono-, di- and trimethylated by the COMPASS complex to form H3K4me1/2/3. H3K4me activates gene expression by regulating transcription elongation and plays a role in telomere length maintenance. H3K4me enrichment correlates with transcription levels, and occurs in a 5' to 3' gradient with H3K4me3 enrichment at the 5'-end of genes, shifting to H3K4me2 and then H3K4me1. Methylated by SET2 to form H3K36me. H3K36me represses gene expression. Methylated by DOT1 to form H3K79me. H3K79me is required for association of SIR proteins with telomeric regions and for telomeric silencing. The COMPASS-mediated formation of H3K4me2/3 and the DOT1-mediated formation of H3K79me require H2BK123ub1. Post-translationally, acetylation of histone H3 leads to transcriptional activation. H3K14ac formation by GCN5 is promoted by H3S10ph. H3K14ac can also be formed by ESA1. H3K56ac formation occurs predominantly in newly synthesized H3 molecules during G1, S and G2/M of the cell cycle and may be involved in DNA repair.

It localises to the nucleus. The protein resides in the chromosome. Functionally, core component of nucleosome. Nucleosomes wrap and compact DNA into chromatin, limiting DNA accessibility to the cellular machineries which require DNA as a template. Histones thereby play a central role in transcription regulation, DNA repair, DNA replication and chromosomal stability. DNA accessibility is regulated via a complex set of post-translational modifications of histones, also called histone code, and nucleosome remodeling. The chain is Histone H3 (HHT1) from Candida glabrata (strain ATCC 2001 / BCRC 20586 / JCM 3761 / NBRC 0622 / NRRL Y-65 / CBS 138) (Yeast).